Here is a 645-residue protein sequence, read N- to C-terminus: MEQINIQFPDGNKKAFDKGTTTEDIAQSISPGLRKKAVAGKFNGQLVDLTKPLETDGSIGIVTPGSEEALEVLRHSTAHLMAHAIKRLYGNVKFGVGPVIEGGFYYDFDIDQNISSDDFEQIEKTMKQIVNENMKIERKVVSRDEAKELFSNDEYKLELIDAIPEDENVTLYSQGDFTDLCRGVHVPSTAKIKEFKLLSTAGAYWRGDSNNKMLQRIYGTAFFDKKELKAHLQMLEERKERDHRKIGKELELFTNSQLVGAGLPLWLPNGATIRREIERYIVDKEVSMGYDHVYTPVLANVDLYKTSGHWDHYQEDMFPPMQLDETESMVLRPMNCPHHMMIYANKPHSYRELPIRIAELGTMHRYEASGAVSGLQRVRGMTLNDSHIFVRPDQIKEEFKRVVNMIIDVYKDFGFEDYSFRLSYRDPEDKEKYFDDDDMWNKAENMLKEAADELGLSYEEAIGEAAFYGPKLDVQVKTAMGKEETLSTAQLDFLLPERFDLTYIGQDGEHHRPVVIHRGVVSTMERFVAFLTEETKGAFPTWLAPKQVQIIPVNVDLHYDYARQLQDELKSQGVRVSIDDRNEKMGYKIREAQMQKIPYQIVVGDKEVENNQVNVRQYGSQDQETVEKDEFIWNLVDEIRLKKHR.

The 63-residue stretch at 1–63 folds into the TGS domain; the sequence is MEQINIQFPD…ETDGSIGIVT (63 aa). The interval 242–540 is catalytic; the sequence is DHRKIGKELE…LTEETKGAFP (299 aa). The Zn(2+) site is built by Cys-336, His-387, and His-517.

It belongs to the class-II aminoacyl-tRNA synthetase family. In terms of assembly, homodimer. Requires Zn(2+) as cofactor.

The protein resides in the cytoplasm. It carries out the reaction tRNA(Thr) + L-threonine + ATP = L-threonyl-tRNA(Thr) + AMP + diphosphate + H(+). In terms of biological role, catalyzes the attachment of threonine to tRNA(Thr) in a two-step reaction: L-threonine is first activated by ATP to form Thr-AMP and then transferred to the acceptor end of tRNA(Thr). Also edits incorrectly charged L-seryl-tRNA(Thr). This Staphylococcus aureus (strain Mu3 / ATCC 700698) protein is Threonine--tRNA ligase.